A 150-amino-acid chain; its full sequence is uncharacterized protein (150 aa).

The next 4 helical transmembrane spans lie at 32 to 52 (ILYGLIAIFSAMLLTSLAVSL), 64 to 84 (FNWLITAISFLSLFIGGFISG), 94 to 114 (IGALTALSFSLIILLFQYLGF), and 123 to 143 (LIFHLGFLGVCMLGGIFGVNM).

The protein resides in the cell membrane. This is an uncharacterized protein from Bacillus subtilis (strain 168).